The primary structure comprises 933 residues: Clumping factor A (933 aa).

Positions 1 to 39 (MNMKKKEKHAIRKKSIGVASVLVGTLIGFGLLSSKEADA) are cleaved as a signal peptide. The YSIRK-G/S signaling motif signature appears at 9–20 (HAIRKKSIGVAS). Disordered stretches follow at residues 34–200 (SKEA…SNKD) and 529–904 (FNNG…SEDE). Residues 40 to 542 (SENSVTQSDS…SGSGDGIDKP (503 aa)) form a ligand binding A region region. The segment covering 47 to 65 (SDSASNESKSNDSSSVSAA) has biased composition (low complexity). Residues 71-105 (TNVSDTKTSSNTNNGETSVAQNPAQQETTQSSSTN) show a composition bias toward polar residues. Composition is skewed to low complexity over residues 106 to 132 (ATTE…ATTQ) and 143 to 162 (NQTS…SVNS). A compositionally biased stretch (polar residues) spans 163 to 200 (PQNSTNAENVSTTQDTSTEATPSNNESAPQSTDASNKD). Residues 547-565 (QPDEPGEIEPIPEDSDSDP) are compositionally biased toward acidic residues. Residues 566–598 (GSDSGSDSNSDSGSDSGSDSTSDSGSDSASDSD) are compositionally biased toward low complexity. Over residues 599 to 861 (SASDSDSASD…DSDSESDSNS (263 aa)) the composition is skewed to acidic residues. The span at 862–880 (DSESGSNNNVVPPNSPKNG) shows a compositional bias: low complexity. A compositionally biased stretch (basic and acidic residues) spans 887–896 (NEAKDSKEPL). An LPXTG sorting signal motif is present at residues 896–900 (LPDTG). At T899 the chain carries Pentaglycyl murein peptidoglycan amidated threonine. A propeptide spans 900–933 (GSEDEANTSLIWGLLASIGSLLLFRRKKENKDKK) (removed by sortase).

The protein belongs to the serine-aspartate repeat-containing protein (SDr) family.

The protein resides in the secreted. Its subcellular location is the cell wall. In terms of biological role, cell surface-associated protein implicated in virulence. Promotes bacterial attachment exclusively to the gamma-chain of human fibrinogen. Induces formation of bacterial clumps. The sequence is that of Clumping factor A (clfA) from Staphylococcus aureus (strain COL).